The following is a 64-amino-acid chain: Prokaryotic ubiquitin-like protein Pup (64 aa).

The tract at residues 1-36 (MAQEQTKRGGGGGDDEDVTGTTAAGQERRKKLAQDT) is disordered. Positions 21 to 58 (TTAAGQERRKKLAQDTDDLLDEIDDVLEENAEDFVRAY) are ARC ATPase binding. Residues 26-52 (QERRKKLAQDTDDLLDEIDDVLEENAE) adopt a coiled-coil conformation. Position 64 is a deamidated glutamine (Gln64). Gln64 participates in a covalent cross-link: Isoglutamyl lysine isopeptide (Gln-Lys) (interchain with K-? in acceptor proteins).

It belongs to the prokaryotic ubiquitin-like protein family. In terms of assembly, strongly interacts with the proteasome-associated ATPase ARC through a hydrophobic interface; the interacting region of Pup lies in its C-terminal half. There is one Pup binding site per ARC hexamer ring. In terms of processing, is modified by deamidation of its C-terminal glutamine to glutamate by the deamidase Dop, a prerequisite to the subsequent pupylation process.

It functions in the pathway protein degradation; proteasomal Pup-dependent pathway. Functionally, protein modifier that is covalently attached to lysine residues of substrate proteins, thereby targeting them for proteasomal degradation. The tagging system is termed pupylation. The chain is Prokaryotic ubiquitin-like protein Pup from Mycobacterium ulcerans (strain Agy99).